The following is a 315-amino-acid chain: Protoheme IX farnesyltransferase (315 aa).

Helical transmembrane passes span 38–58 (IIEL…QGVP), 62–82 (LVLL…ALNM), 111–131 (LVFG…TVNW), 132–152 (LSAW…TMIL), 159–179 (NIVW…SAVT), 184–204 (WAPV…YWPL), 233–253 (IVIY…LGYT), 255–275 (WFYT…AHGL), and 293–313 (LFHW…VDPF).

Belongs to the UbiA prenyltransferase family. Protoheme IX farnesyltransferase subfamily.

It localises to the cell membrane. It catalyses the reaction heme b + (2E,6E)-farnesyl diphosphate + H2O = Fe(II)-heme o + diphosphate. It functions in the pathway porphyrin-containing compound metabolism; heme O biosynthesis; heme O from protoheme: step 1/1. Converts heme B (protoheme IX) to heme O by substitution of the vinyl group on carbon 2 of heme B porphyrin ring with a hydroxyethyl farnesyl side group. The polypeptide is Protoheme IX farnesyltransferase (Streptomyces coelicolor (strain ATCC BAA-471 / A3(2) / M145)).